The chain runs to 497 residues: UDP-N-acetylmuramoyl-L-alanyl-D-glutamate--2,6-diaminopimelate ligase (497 aa).

Ser33 is a binding site for UDP-N-acetyl-alpha-D-muramoyl-L-alanyl-D-glutamate. An ATP-binding site is contributed by 119–125 (GTNGKTT). UDP-N-acetyl-alpha-D-muramoyl-L-alanyl-D-glutamate-binding positions include 161-162 (TT), Ser188, Gln194, and Arg196. Position 228 is an N6-carboxylysine (Lys228). Meso-2,6-diaminopimelate-binding positions include Arg390, 414-417 (DNPR), Gly465, and Glu469. The short motif at 414 to 417 (DNPR) is the Meso-diaminopimelate recognition motif element.

The protein belongs to the MurCDEF family. MurE subfamily. It depends on Mg(2+) as a cofactor. In terms of processing, carboxylation is probably crucial for Mg(2+) binding and, consequently, for the gamma-phosphate positioning of ATP.

The protein localises to the cytoplasm. It catalyses the reaction UDP-N-acetyl-alpha-D-muramoyl-L-alanyl-D-glutamate + meso-2,6-diaminopimelate + ATP = UDP-N-acetyl-alpha-D-muramoyl-L-alanyl-gamma-D-glutamyl-meso-2,6-diaminopimelate + ADP + phosphate + H(+). It participates in cell wall biogenesis; peptidoglycan biosynthesis. Its function is as follows. Catalyzes the addition of meso-diaminopimelic acid to the nucleotide precursor UDP-N-acetylmuramoyl-L-alanyl-D-glutamate (UMAG) in the biosynthesis of bacterial cell-wall peptidoglycan. The chain is UDP-N-acetylmuramoyl-L-alanyl-D-glutamate--2,6-diaminopimelate ligase from Synechococcus elongatus (strain ATCC 33912 / PCC 7942 / FACHB-805) (Anacystis nidulans R2).